The primary structure comprises 183 residues: MNNTILPRNFYERPTLTVAGELLGKMLKFSNFSGIITEVEAYIGMDDPACHAARGYTNRTSVMFGTPGFSYVYFIYGMYYCLNIVTEAEGFPAAVLIRGLKLTEPLEANLGGPGILCKKLNITKEHNKQDLTISHEFCLYEYHLKPDYVCTPRIGISKGKEKFWRFKSCVLADMPKITLNNKY.

The protein belongs to the DNA glycosylase MPG family.

The protein is Putative 3-methyladenine DNA glycosylase of Wolbachia pipientis subsp. Culex pipiens (strain wPip).